The following is a 295-amino-acid chain: Cyclic dipyrimidine nucleotide synthase CdnE (295 aa).

Positions 1–25 (MSIDWEQTFRKWSKPSSETESTKAE) are disordered. Positions 51, 53, and 59 each coordinate UTP. The Mg(2+) site is built by aspartate 65 and aspartate 67. UTP contacts are provided by aspartate 67, aspartate 124, and lysine 125. Mg(2+)-binding residues include aspartate 128 and aspartate 139. Residues aspartate 139, asparagine 173, lysine 201, and serine 220 each coordinate UTP. The Pyrimidine specificity motif (R/Q)xW in donor pocket motif lies at 274–276 (QMW).

This sequence belongs to the CD-NTase family. E02 subfamily. Mg(2+) is required as a cofactor.

It catalyses the reaction 2 UTP = c-di-UMP + 2 diphosphate. The enzyme catalyses UTP + CTP = cyclic CMP-UMP + 2 diphosphate. In terms of biological role, cyclic nucleotide synthase (second messenger synthase) of a CBASS antivirus system. CBASS (cyclic oligonucleotide-based antiphage signaling system) provides immunity against bacteriophage. The CD-NTase protein synthesizes cyclic nucleotides in response to infection; these serve as specific second messenger signals. The signals activate a diverse range of effectors, leading to bacterial cell death and thus abortive phage infection. A type I-B(UU) CBASS system. Its function is as follows. Cyclic dinucleotide synthase that catalyzes the synthesis of 3',3'-cyclic UMP-UMP (c-di-UMP) as the major product, and of 3',3'-cyclic CMP-UMP as a minor product, which are second messengers for cell signal transduction. This is Cyclic dipyrimidine nucleotide synthase CdnE from Legionella pneumophila.